Reading from the N-terminus, the 622-residue chain is Low affinity potassium transport system protein Kup (622 aa).

12 helical membrane passes run 9-29 (LPAITLAAIGVVYGDIGTSPL), 49-69 (VFGFLSLIFWLLIFVVSIKYL), 103-123 (VIMGLIGGSFFYGEVVITPAI), 137-157 (PQLDTWIVPLSIIVLTLLFMI), 165-185 (VGKLFAPIMLTWFLILAGLGL), 213-233 (VSFIALGAVVLSITGGEVLYA), 247-267 (WFTVVLPSLTLNYFGQGALLL), 276-296 (PFFLLAPDWALIPLLIIAALA), 337-357 (IYIPFVNWMLYVAVVIVIVSF), 363-383 (LAAAYGIAVTGTMVLTSILST), 396-416 (FVALILIAFLCVDIPLFTANL), and 419-439 (LLSGGWLPLSLGTVMFIVMTT).

The protein belongs to the HAK/KUP transporter (TC 2.A.72) family.

Its subcellular location is the cell inner membrane. It carries out the reaction K(+)(in) + H(+)(in) = K(+)(out) + H(+)(out). Functionally, responsible for the low-affinity transport of potassium into the cell. Likely operates as a K(+):H(+) symporter. The chain is Low affinity potassium transport system protein Kup from Shigella flexneri.